The chain runs to 118 residues: Ribonuclease P protein component (118 aa).

The protein belongs to the RnpA family. As to quaternary structure, consists of a catalytic RNA component (M1 or rnpB) and a protein subunit.

The catalysed reaction is Endonucleolytic cleavage of RNA, removing 5'-extranucleotides from tRNA precursor.. Functionally, RNaseP catalyzes the removal of the 5'-leader sequence from pre-tRNA to produce the mature 5'-terminus. It can also cleave other RNA substrates such as 4.5S RNA. The protein component plays an auxiliary but essential role in vivo by binding to the 5'-leader sequence and broadening the substrate specificity of the ribozyme. This Mycobacterium sp. (strain KMS) protein is Ribonuclease P protein component.